The primary structure comprises 281 residues: MGLYQAKNDEGSDPKSSSKIDDLIENEAEIIRLIKEDGKLLIDNGDGRDIHNIIQEDKLLSVEFNEVLKRFHGEEKSDIPRKEFDEDEDDGYDSNEHHQKTIEVMNTLNHVINKEVIPPENFSHVVGEIYRSSFPRQENFSFLHERLKLKSILVLIPEEYPQENLNFLKLTGIKLYQVGMSGNKEPFVNIPSHLLTKALEIVLNPANQPILIHCNRGKHRTGCLIGCIRKLQNWSLTMIFDEYRRFAFPKARALDQQFIEMYDDDEIKRIASKNNWLPLQW.

A disordered region spans residues 1-20 (MGLYQAKNDEGSDPKSSSKI). Positions 7 to 20 (KNDEGSDPKSSSKI) are enriched in basic and acidic residues. Phosphoserine is present on Ser-94. The Tyrosine-protein phosphatase domain occupies 121 to 271 (NFSHVVGEIY…YDDDEIKRIA (151 aa)). 1D-myo-inositol hexakisphosphate-binding residues include Asn-189, Ile-190, and His-193. Cys-214 serves as the catalytic Phosphocysteine intermediate.

Belongs to the protein-tyrosine phosphatase family. Atypical dual-specificity phosphatase Siw14-like subfamily. Monomer.

The protein resides in the cytoplasm. The enzyme catalyses 5-diphospho-1D-myo-inositol 1,2,3,4,6-pentakisphosphate + H2O = 1D-myo-inositol hexakisphosphate + phosphate + H(+). It catalyses the reaction 5-diphospho-1D-myo-inositol 1,3,4,6-tetrakisphosphate + H2O = 1D-myo-inositol 1,3,4,5,6-pentakisphosphate + phosphate + H(+). It carries out the reaction 3,5-bis(diphospho)-1D-myo-inositol 1,2,4,6-tetrakisphosphate + H2O = 3-diphospho-1D-myo-inositol 1,2,4,5,6-pentakisphosphate + phosphate + 2 H(+). The catalysed reaction is 1,5-bis(diphospho)-1D-myo-inositol 2,3,4,6-tetrakisphosphate + H2O = 1-diphospho-1D-myo-inositol 2,3,4,5,6-pentakisphosphate + phosphate + 2 H(+). The enzyme catalyses 6-diphospho-1D-myo-inositol pentakisphosphate + H2O = 1D-myo-inositol hexakisphosphate + phosphate + H(+). Functionally, selectively cleaves the beta-phosphate at the 5-position of soluble inositol pyrophosphates. Converts 5-diphosphoinositol tetrakisphosphate (5-PP-InsP(4)) into inositol pentakisphosphate (InsP(5)), 5-diphosphoinositol pentakisphosphate (5-PP-IP(5) or 5-InsP(7)) into inositol hexakisphosphate (IP(6) or InsP(6)), and 1,5-bisdiphosphoinositol tetrakisphosphate (1,5-PP-IP(5) or InsP(8)) into 1-diphosphoinositol pentakisphosphate (1-PP-IP(5) or 1-InsP(7)). Also has activity on 1,5-bis-diphosphoinositol 2,3,4,6-tetrakisphosphate (1,5-InsP(8)) and 3,5-InsP(8). Modulates inositol pyrophosphate metabolism that may have an influence in stress response. Plays a role in actin filament organization and endocytosis. Functions as a prion suppressing factor possibly due to its phosphatase activity against inositol pyrophosphates, which are signal transduction molecules involved in prion propagation. The protein is Inositol diphosphatase SIW14 (SIW14) of Saccharomyces cerevisiae (strain ATCC 204508 / S288c) (Baker's yeast).